The chain runs to 103 residues: UPF0145 protein PBPRB0184 (103 aa).

This sequence belongs to the UPF0145 family.

This Photobacterium profundum (strain SS9) protein is UPF0145 protein PBPRB0184.